Reading from the N-terminus, the 631-residue chain is tRNA uridine 5-carboxymethylaminomethyl modification enzyme MnmG (631 aa).

14–19 contacts FAD; sequence GGGHAG. Residue 274–288 coordinates NAD(+); it reads GPRYCPSIEDKIHRF.

The protein belongs to the MnmG family. Homodimer. Heterotetramer of two MnmE and two MnmG subunits. The cofactor is FAD.

It localises to the cytoplasm. In terms of biological role, NAD-binding protein involved in the addition of a carboxymethylaminomethyl (cmnm) group at the wobble position (U34) of certain tRNAs, forming tRNA-cmnm(5)s(2)U34. The protein is tRNA uridine 5-carboxymethylaminomethyl modification enzyme MnmG of Pseudomonas paraeruginosa (strain DSM 24068 / PA7) (Pseudomonas aeruginosa (strain PA7)).